The following is an 81-amino-acid chain: Metallocarboxypeptidase inhibitor (81 aa).

A signal peptide spans 1 to 15; that stretch reads MFLLVFLCCLHLVIS. 4 disulfide bridges follow: Cys25-Cys48, Cys32-Cys76, Cys33-Cys57, and Cys36-Cys72.

In terms of biological role, tightly binding, competitive inhibitor of different types of pancreatic-like carboxypeptidases. Inhibits human CPA4. The polypeptide is Metallocarboxypeptidase inhibitor (Hirudo medicinalis (Medicinal leech)).